The sequence spans 114 residues: UPF0342 protein NT01CX_2274 (114 aa).

This sequence belongs to the UPF0342 family.

This Clostridium novyi (strain NT) protein is UPF0342 protein NT01CX_2274.